The sequence spans 250 residues: uncharacterized protein (250 aa).

The protein to Synechocystis PCC 6803 sll0249.

This is an uncharacterized protein from Nostoc sp. (strain PCC 7120 / SAG 25.82 / UTEX 2576).